A 322-amino-acid polypeptide reads, in one-letter code: Acetyl-coenzyme A carboxylase carboxyl transferase subunit alpha (322 aa).

One can recognise a CoA carboxyltransferase C-terminal domain in the interval 39 to 293 (RLASKSQQLT…KRALAESLRQ (255 aa)).

This sequence belongs to the AccA family. In terms of assembly, acetyl-CoA carboxylase is a heterohexamer composed of biotin carboxyl carrier protein (AccB), biotin carboxylase (AccC) and two subunits each of ACCase subunit alpha (AccA) and ACCase subunit beta (AccD).

The protein localises to the cytoplasm. The catalysed reaction is N(6)-carboxybiotinyl-L-lysyl-[protein] + acetyl-CoA = N(6)-biotinyl-L-lysyl-[protein] + malonyl-CoA. Its pathway is lipid metabolism; malonyl-CoA biosynthesis; malonyl-CoA from acetyl-CoA: step 1/1. Component of the acetyl coenzyme A carboxylase (ACC) complex. First, biotin carboxylase catalyzes the carboxylation of biotin on its carrier protein (BCCP) and then the CO(2) group is transferred by the carboxyltransferase to acetyl-CoA to form malonyl-CoA. This Ralstonia pickettii (strain 12J) protein is Acetyl-coenzyme A carboxylase carboxyl transferase subunit alpha.